Reading from the N-terminus, the 115-residue chain is Large ribosomal subunit protein bL20 (115 aa).

The protein belongs to the bacterial ribosomal protein bL20 family.

In terms of biological role, binds directly to 23S ribosomal RNA and is necessary for the in vitro assembly process of the 50S ribosomal subunit. It is not involved in the protein synthesizing functions of that subunit. The polypeptide is Large ribosomal subunit protein bL20 (Chlorobium phaeobacteroides (strain BS1)).